Reading from the N-terminus, the 353-residue chain is GTPase Obg (353 aa).

One can recognise an Obg domain in the interval 1–159 (MKFIDEATIK…FELYLELKVL (159 aa)). In terms of domain architecture, OBG-type G spans 160-332 (ADVGLLGMPN…LTYAIMEHVE (173 aa)). GTP contacts are provided by residues 166 to 173 (GMPNAGKS), 191 to 195 (FTTLH), 213 to 216 (DVPG), 284 to 287 (NKVD), and 313 to 315 (SAL). Mg(2+)-binding residues include serine 173 and threonine 193.

This sequence belongs to the TRAFAC class OBG-HflX-like GTPase superfamily. OBG GTPase family. As to quaternary structure, monomer. Requires Mg(2+) as cofactor.

It is found in the cytoplasm. Functionally, an essential GTPase which binds GTP, GDP and possibly (p)ppGpp with moderate affinity, with high nucleotide exchange rates and a fairly low GTP hydrolysis rate. Plays a role in control of the cell cycle, stress response, ribosome biogenesis and in those bacteria that undergo differentiation, in morphogenesis control. In Methylobacillus flagellatus (strain ATCC 51484 / DSM 6875 / VKM B-1610 / KT), this protein is GTPase Obg.